We begin with the raw amino-acid sequence, 272 residues long: MPELPEVETTKTSLLPLLNQRVKSVQVRDSRLRWPIPEDISRLAGQRLTSLKRRSKYILAEFETDQMLWHLGMSGSFRVATAADELRKHDHLILTFDDGTELRYHDPRRFGCILWLNEESQSKLLNPLGPEPLSEDFNADYLYQKLKSKQVGIKIALMDNHVVVGVGNIYATESLFNLGIHPAQPASSLSKPQILALVQEIKRILKFAIELGGSTLRDYTNAMGENGYFQQTLLAYGRAGEMCVNCETPLENLKLGQRASVFCPQCQPLKRK.

The active-site Schiff-base intermediate with DNA is the Pro-2. Catalysis depends on Glu-3, which acts as the Proton donor. Residue Lys-56 is the Proton donor; for beta-elimination activity of the active site. The DNA site is built by His-89, Arg-108, and Lys-149. The segment at 234 to 268 adopts an FPG-type zinc-finger fold; the sequence is LAYGRAGEMCVNCETPLENLKLGQRASVFCPQCQP. The active-site Proton donor; for delta-elimination activity is Arg-258.

It belongs to the FPG family. Monomer. Zn(2+) is required as a cofactor.

The enzyme catalyses Hydrolysis of DNA containing ring-opened 7-methylguanine residues, releasing 2,6-diamino-4-hydroxy-5-(N-methyl)formamidopyrimidine.. The catalysed reaction is 2'-deoxyribonucleotide-(2'-deoxyribose 5'-phosphate)-2'-deoxyribonucleotide-DNA = a 3'-end 2'-deoxyribonucleotide-(2,3-dehydro-2,3-deoxyribose 5'-phosphate)-DNA + a 5'-end 5'-phospho-2'-deoxyribonucleoside-DNA + H(+). Functionally, involved in base excision repair of DNA damaged by oxidation or by mutagenic agents. Acts as a DNA glycosylase that recognizes and removes damaged bases. Has a preference for oxidized purines, such as 7,8-dihydro-8-oxoguanine (8-oxoG). Has AP (apurinic/apyrimidinic) lyase activity and introduces nicks in the DNA strand. Cleaves the DNA backbone by beta-delta elimination to generate a single-strand break at the site of the removed base with both 3'- and 5'-phosphates. The chain is Formamidopyrimidine-DNA glycosylase from Acinetobacter baylyi (strain ATCC 33305 / BD413 / ADP1).